The sequence spans 343 residues: RNA 3'-terminal phosphate cyclase (343 aa).

ATP contacts are provided by residues Gln102 and 284–288 (FLGDQ). His308 functions as the Tele-AMP-histidine intermediate in the catalytic mechanism.

Belongs to the RNA 3'-terminal cyclase family. Type 1 subfamily.

The protein resides in the cytoplasm. The catalysed reaction is a 3'-end 3'-phospho-ribonucleotide-RNA + ATP = a 3'-end 2',3'-cyclophospho-ribonucleotide-RNA + AMP + diphosphate. Functionally, catalyzes the conversion of 3'-phosphate to a 2',3'-cyclic phosphodiester at the end of RNA. The mechanism of action of the enzyme occurs in 3 steps: (A) adenylation of the enzyme by ATP; (B) transfer of adenylate to an RNA-N3'P to produce RNA-N3'PP5'A; (C) and attack of the adjacent 2'-hydroxyl on the 3'-phosphorus in the diester linkage to produce the cyclic end product. The biological role of this enzyme is unknown but it is likely to function in some aspects of cellular RNA processing. In Thermococcus kodakarensis (strain ATCC BAA-918 / JCM 12380 / KOD1) (Pyrococcus kodakaraensis (strain KOD1)), this protein is RNA 3'-terminal phosphate cyclase (rtcA).